The sequence spans 413 residues: MRAFPRVLPFRHQRSYNNILLRTVRLFGSSLSSFDFSRQMPKVDPDNTAAMLLQKNLIQRNNMLYGYGSGTIRCTLLDSTGRAKSPLVEIKREDLVSKHGLLPRDLRKIEKSRKNDLVPSLLVRENSILISLLTVKALIKPDMVIIFDSAGSGITLNSEAHKDFINDMKLRLKNQETSELNSDPLPYEFRALETIFISALSNLTSEMKVLLTICKGVLQDLEFSITRDKLRFLLGQNKKLSSFNKKAVLVKDMLDDLLEQDDMLCDMYLTDKKAGKIRVQDDHTEIEMLLETYHNYVDEIVQKSESAISDVKTTEEIINIILDSNRNELMLLGIRYAIGMLSLGGALFLGSIYGMNLESFIEESNYAYLTVTILGLISTVWLYAKGIRHLHKLQRMTLLSKIKTDSVHELLKK.

A mitochondrion-targeting transit peptide spans 1–35 (MRAFPRVLPFRHQRSYNNILLRTVRLFGSSLSSFD). Asparagine 202 carries N-linked (GlcNAc...) asparagine glycosylation. Residues 329–349 (LMLLGIRYAIGMLSLGGALFL) traverse the membrane as a helical segment. Positions 353 to 356 (YGMN) match the YGMN motif. The chain crosses the membrane as a helical span at residues 367–387 (AYLTVTILGLISTVWLYAKGI).

Belongs to the CorA metal ion transporter (MIT) (TC 1.A.35) family. As to quaternary structure, forms homooligomers. Interacts with MRS2. Post-translationally, N-glycosylated. Glycosylation is important for correct localization of the protein.

It localises to the mitochondrion inner membrane. Mitochondrial inner membrane magnesium transporter required for mitochondrial magnesium homeostasis. Modulates the conductance of the MRS2 channel. Involved in the splicing of mRNA group II introns in mitochondria by affecting mitochondrial magnesium concentrations, which are critical for group II intron splicing. The protein is Mitochondrial inner membrane magnesium transporter MFM1 (MFM1) of Saccharomyces cerevisiae (strain ATCC 204508 / S288c) (Baker's yeast).